The sequence spans 258 residues: uncharacterized protein (258 aa).

Positions 1–20 are cleaved as a signal peptide; sequence MKCFQKLYIFILILIVLMAG. Cys21 carries the N-palmitoyl cysteine lipid modification. Residue Cys21 is the site of S-diacylglycerol cysteine attachment.

This sequence belongs to the staphylococcal tandem lipoprotein family.

It is found in the cell membrane. This is an uncharacterized protein from Staphylococcus aureus (strain COL).